The sequence spans 345 residues: Ribosomal RNA large subunit methyltransferase F (345 aa).

Polar residues predominate over residues 1–14 (MTSKPMTRRPTANN). Disordered regions lie at residues 1–35 (MTSK…RNPH) and 225–258 (EANS…NAAQ). Basic residues predominate over residues 229–239 (RKQHNLQRHRG). Residues 246 to 258 (ISRSSTKSGNAAQ) are compositionally biased toward polar residues.

This sequence belongs to the methyltransferase superfamily. METTL16/RlmF family.

Its subcellular location is the cytoplasm. The enzyme catalyses adenosine(1618) in 23S rRNA + S-adenosyl-L-methionine = N(6)-methyladenosine(1618) in 23S rRNA + S-adenosyl-L-homocysteine + H(+). In terms of biological role, specifically methylates the adenine in position 1618 of 23S rRNA. The protein is Ribosomal RNA large subunit methyltransferase F of Psychrobacter arcticus (strain DSM 17307 / VKM B-2377 / 273-4).